Consider the following 767-residue polypeptide: Cation/H(+) antiporter 27 (767 aa).

Transmembrane regions (helical) follow at residues 39–59 (LPLLLLQISVFSIFSVSFQFL), 63–83 (FGKFAFLTQMLAGICLGPSVI), 99–119 (VYIIESFEAICFLFICYITTC), 135–155 (INGILLFLIPFVWGQFAAILI), 173–193 (HVAIVQSTMFFQVVYGVLSSL), 205–225 (LASMMVHDCLSWCFFMLNIAI), 242–262 (VLQMIMILVIAYVFRPLMLWM), 280–300 (ICVLLFISCLWAEFVGLPYFF), 323–343 (IGCFVWSVLMPCYVIGIGLNI), 371–391 (IALPSLYYKVPLWHAILVGFI), and 415–435 (KSFGAMVMSATVNSTIFIVIV).

Belongs to the monovalent cation:proton antiporter 2 (CPA2) transporter (TC 2.A.37) family. CHX (TC 2.A.37.4) subfamily. In terms of tissue distribution, specifically expressed in pollen.

It localises to the membrane. Its function is as follows. May operate as a cation/H(+) antiporter. This Arabidopsis thaliana (Mouse-ear cress) protein is Cation/H(+) antiporter 27 (CHX27).